A 119-amino-acid chain; its full sequence is Large ribosomal subunit protein bL20 (119 aa).

The protein belongs to the bacterial ribosomal protein bL20 family.

Binds directly to 23S ribosomal RNA and is necessary for the in vitro assembly process of the 50S ribosomal subunit. It is not involved in the protein synthesizing functions of that subunit. This is Large ribosomal subunit protein bL20 from Dichelobacter nodosus (strain VCS1703A).